Here is a 190-residue protein sequence, read N- to C-terminus: Probable oligoribonuclease (190 aa).

Residues 19–181 form the Exonuclease domain; that stretch reads MVWVDLEMTG…QDIEESIEEL (163 aa). Tyrosine 140 is an active-site residue.

This sequence belongs to the oligoribonuclease family.

Functionally, 3'-to-5' exoribonuclease specific for small oligoribonucleotides. This Dictyostelium discoideum (Social amoeba) protein is Probable oligoribonuclease (rexo2-1).